A 455-amino-acid polypeptide reads, in one-letter code: Probable glycine dehydrogenase (decarboxylating) subunit 1 (455 aa).

Belongs to the GcvP family. N-terminal subunit subfamily. As to quaternary structure, the glycine cleavage system is composed of four proteins: P, T, L and H. In this organism, the P 'protein' is a heterodimer of two subunits.

It carries out the reaction N(6)-[(R)-lipoyl]-L-lysyl-[glycine-cleavage complex H protein] + glycine + H(+) = N(6)-[(R)-S(8)-aminomethyldihydrolipoyl]-L-lysyl-[glycine-cleavage complex H protein] + CO2. The glycine cleavage system catalyzes the degradation of glycine. The P protein binds the alpha-amino group of glycine through its pyridoxal phosphate cofactor; CO(2) is released and the remaining methylamine moiety is then transferred to the lipoamide cofactor of the H protein. This chain is Probable glycine dehydrogenase (decarboxylating) subunit 1, found in Francisella tularensis subsp. novicida (strain U112).